The following is a 634-amino-acid chain: Microtubule-associated protein 70-2 (634 aa).

Residues 1 to 57 (MSDVSGDGDLSATVTEHEVTPQPPVSSATYPSLTVSASYKESSGGKSSSKRRPIRPS) are disordered. A compositionally biased stretch (polar residues) spans 25 to 35 (VSSATYPSLTV). Residues 36–47 (SASYKESSGGKS) show a composition bias toward low complexity. Residues 74 to 392 (DPVKVELNRL…LRLKVLEETL (319 aa)) adopt a coiled-coil conformation. Positions 258-494 (ILDRMHRQKV…YSFNKATDDS (237 aa)) are required for targeting to microtubules. Polar residues-rich tracts occupy residues 393-417 (RGTS…SRRQ) and 443-464 (MRHS…TSKS). Disordered regions lie at residues 393-526 (RGTS…SVPG) and 594-634 (VEKD…KSTQ). Residues 532-601 (LQKEVVSLRK…MRVEKDQDAR (70 aa)) are a coiled coil. Residues 605–616 (FSNSKSPSNTAQ) are compositionally biased toward polar residues.

The protein belongs to the MAP70 family.

The protein resides in the cytoplasm. It is found in the cytoskeleton. Plant-specific protein that interact with microtubules. This chain is Microtubule-associated protein 70-2 (MAP70.2), found in Arabidopsis thaliana (Mouse-ear cress).